The sequence spans 378 residues: Aminotransferase apf4 (378 aa).

R88 lines the pyridoxal 5'-phosphate pocket. K189 is subject to N6-(pyridoxal phosphate)lysine. E228 contacts pyridoxal 5'-phosphate. Positions 359–378 (ERGHNGQPTADPTRVIEMPE) are disordered.

It belongs to the class-IV pyridoxal-phosphate-dependent aminotransferase family. The cofactor is pyridoxal 5'-phosphate.

The protein operates within secondary metabolite biosynthesis. Its function is as follows. Aminotransferase; part of the gene cluster that mediates the biosynthesis of the cyclic tetrapeptide apicidin F (APF). The non-ribosomal peptide synthetase apf1 incorporates four different amino acids to produce apicidin F: L-phenylalanine, D-pipecolic acid (D-pip), N-methoxy-L-tryptophan and L-2-aminooctanedioic acid. L-Phenylalanine is the only proteinogenic amino acid directly used by apf1. The 3 other apf1 substrates are non-proteinogenic and have to be modified by other enzymes of the cluster. Lysine is converted to delta-1-pyrroline-5-carboxylate (P5C) which is reduced to L-pipecolic acid (L-pip) by apf3. L-pip is epimerized to D-pip, probably by apf1 activity, prior to incorporation. L-Tryptophan is N-oxidyzed by one of the cytochrome P450 monooxygenases (apf7 or apf8), and further methylated at the hydroxy group by the O-methyltransferase apf6 to yield N-methoxy-L-tryptophan. The synthesis of the fourth apf1 substrate is more complex. The fatty acid synthase apf5 is involved in the synthesis of the octanoic acid backbone of L-2-aminooctanedioic acid by fixing one acetyl-CoA unit and three malonyl-CoA units. Then one of the cytochrome P450 monooxygenases (apf7 or apf8) may oxidize this backbone to 2-oxooctanoic acid. The aminotransferase apf4 is predicted to catalyze the exchange of the keto group with an amino group. The next step would be the oxidation of 2-aminooctanoic acid by one of the cytochrome P450 monooxygenases (apf7 or apf8). The last step is the oxidation of 2-amino-8-hydroxyoctanoic acid to 2-aminooctanedioic acid is catalyzed by the FAD-dependent monooxygenase apf9. The polypeptide is Aminotransferase apf4 (Gibberella fujikuroi (strain CBS 195.34 / IMI 58289 / NRRL A-6831) (Bakanae and foot rot disease fungus)).